Consider the following 135-residue polypeptide: Small ribosomal subunit protein uS11 (135 aa).

Residues 1–22 (MPPKSRTAAGAKKVRRKEKKNV) are disordered.

This sequence belongs to the universal ribosomal protein uS11 family. Part of the 30S ribosomal subunit. Interacts with proteins S7 and S18. Binds to IF-3.

Functionally, located on the platform of the 30S subunit, it bridges several disparate RNA helices of the 16S rRNA. Forms part of the Shine-Dalgarno cleft in the 70S ribosome. This chain is Small ribosomal subunit protein uS11, found in Nocardioides sp. (strain ATCC BAA-499 / JS614).